A 424-amino-acid polypeptide reads, in one-letter code: Histidine--tRNA ligase (424 aa).

It belongs to the class-II aminoacyl-tRNA synthetase family. In terms of assembly, homodimer.

It is found in the cytoplasm. It catalyses the reaction tRNA(His) + L-histidine + ATP = L-histidyl-tRNA(His) + AMP + diphosphate + H(+). This is Histidine--tRNA ligase from Shigella sonnei (strain Ss046).